Consider the following 356-residue polypeptide: MYQLLLSLMFRVPPERIHHIAFTAMKLVTRFAPLRWLVAKVLVVDDPVLRSQAFGLTFPAPLGLAAGFDKDATGVDAWGPLGFGFAEVGTVTAQAQPGNPAPRLFRLPADRALINRMGFNNHGAGHAANFLRQRRVTVPIGANIGKTKIVEAVDAAADYTASAQLLGPLADFMVVNVSSPNTPGLRDLQAVESLRPILQAVLDTVSVPVLVKIAPDLSDEDVDAVADLAVELGLAGIVATNTTIRRDGLKTPDAEVAALGAGGLSGAPVADRSLEVLRRLYARVGDKMTIISVGGIETADQAWERILAGATLVQGYTGFIYGGPFWARSIHKGIAKRVRAAGFSSIAQAVGAENPR.

FMN-binding positions include 66-70 (AGFDK) and Thr-90. Lys-70 contributes to the substrate binding site. Residue 115–119 (NRMGF) participates in substrate binding. Residues Asn-143 and Asn-176 each contribute to the FMN site. Asn-176 serves as a coordination point for substrate. The active-site Nucleophile is Ser-179. Residue Asn-181 coordinates substrate. FMN-binding residues include Lys-212 and Thr-240. Residue 241-242 (NT) coordinates substrate. FMN-binding positions include Gly-266, Gly-295, and 316–317 (YT).

The protein belongs to the dihydroorotate dehydrogenase family. Type 2 subfamily. As to quaternary structure, monomer. The cofactor is FMN.

The protein localises to the cell membrane. It carries out the reaction (S)-dihydroorotate + a quinone = orotate + a quinol. It participates in pyrimidine metabolism; UMP biosynthesis via de novo pathway; orotate from (S)-dihydroorotate (quinone route): step 1/1. Its function is as follows. Catalyzes the conversion of dihydroorotate to orotate with quinone as electron acceptor. This Rhodococcus erythropolis (strain PR4 / NBRC 100887) protein is Dihydroorotate dehydrogenase (quinone).